We begin with the raw amino-acid sequence, 361 residues long: Ribosomal RNA large subunit methyltransferase M (361 aa).

S-adenosyl-L-methionine is bound by residues S193, 226–229 (CPGG), D245, D265, and D283. K312 (proton acceptor) is an active-site residue.

Belongs to the class I-like SAM-binding methyltransferase superfamily. RNA methyltransferase RlmE family. RlmM subfamily. As to quaternary structure, monomer.

It is found in the cytoplasm. The enzyme catalyses cytidine(2498) in 23S rRNA + S-adenosyl-L-methionine = 2'-O-methylcytidine(2498) in 23S rRNA + S-adenosyl-L-homocysteine + H(+). In terms of biological role, catalyzes the 2'-O-methylation at nucleotide C2498 in 23S rRNA. This chain is Ribosomal RNA large subunit methyltransferase M, found in Histophilus somni (strain 2336) (Haemophilus somnus).